The sequence spans 265 residues: Short-chain dehydrogenase/reductase fsr5 (265 aa).

The N-terminal stretch at 1–32 (MASLGKYVSKLAGSRVLVIGGSSGIGFGVAEA) is a signal peptide. Positions 22, 23, 25, 45, and 50 each coordinate NADP(+). Residue Asn-62 is glycosylated (N-linked (GlcNAc...) asparagine). The NADP(+) site is built by Asn-88, Arg-130, and Thr-204. Asn-218 and Asn-250 each carry an N-linked (GlcNAc...) asparagine glycan.

Belongs to the short-chain dehydrogenases/reductases (SDR) family.

Its function is as follows. Short-chain dehydrogenase/reductase; part of the gene cluster that mediates the biosynthesis of fusarubins, highly pigmented naphthoquinones responsible for the coloration of the fruiting bodies. The non-reducing polyketide synthase FSR1 is responsible for the condensation of seven acetyl-CoA units to yield a haptaketide. After rings A and B are formed by aldol-type cyclization, the PKS-derived product is released as 6-O-demethylfusarubinaldehyde. Then, two hydroxyl groups at C-5 and C-10 are incorporated by FSR3, and simultaneously hydroxyl groups at C-6 and C-8 are methylated by FSR2. The aldehyde is, on the one hand, reduced by FSR3 to 8-O-methylfusarubin alcohol, which equilibrates mainly with 8-O-methylfusarubin and only small amounts of 8-O-methylnectriafurone. On the other hand, the aldehyde can be oxidized to form 8-O-methylfusarubinic acid, a reaction driven by FSR3 equilibrating with 8-O-methylfusarubinlactone, finally resulting in 8-O-methylanhydrofusarubinlactol after a further reduction step and loss of water. 8-O-Methylfusarubinic acid can also undergo decarboxylation, resulting in 8-O-methyl-13-hydroxynorjavanicin after another hydroxylation step at C-13. Both steps are most likely also accomplished by FSR3. No enzymatic function has been determined so far for either FSR4 and FSR5. Their deletion does not alter the product spectrum, but the possibility that they catalyze specific enzymatic steps during perithecium development cannot be ruled out. FSR4 might possess a regulatory function in the biosynthesis of fusarubins. This is Short-chain dehydrogenase/reductase fsr5 from Gibberella fujikuroi (strain CBS 195.34 / IMI 58289 / NRRL A-6831) (Bakanae and foot rot disease fungus).